The sequence spans 437 residues: Serine hydroxymethyltransferase 1 (437 aa).

Residues L132 and 136–138 (GHL) each bind (6S)-5,6,7,8-tetrahydrofolate. K241 is subject to N6-(pyridoxal phosphate)lysine.

The protein belongs to the SHMT family. As to quaternary structure, homodimer. The cofactor is pyridoxal 5'-phosphate.

The protein resides in the cytoplasm. The enzyme catalyses (6R)-5,10-methylene-5,6,7,8-tetrahydrofolate + glycine + H2O = (6S)-5,6,7,8-tetrahydrofolate + L-serine. The protein operates within one-carbon metabolism; tetrahydrofolate interconversion. It functions in the pathway amino-acid biosynthesis; glycine biosynthesis; glycine from L-serine: step 1/1. In terms of biological role, catalyzes the reversible interconversion of serine and glycine with tetrahydrofolate (THF) serving as the one-carbon carrier. This reaction serves as the major source of one-carbon groups required for the biosynthesis of purines, thymidylate, methionine, and other important biomolecules. Also exhibits THF-independent aldolase activity toward beta-hydroxyamino acids, producing glycine and aldehydes, via a retro-aldol mechanism. This Mesorhizobium japonicum (strain LMG 29417 / CECT 9101 / MAFF 303099) (Mesorhizobium loti (strain MAFF 303099)) protein is Serine hydroxymethyltransferase 1.